We begin with the raw amino-acid sequence, 245 residues long: 1-(5-phosphoribosyl)-5-[(5-phosphoribosylamino)methylideneamino] imidazole-4-carboxamide isomerase (245 aa).

Residue aspartate 7 is the Proton acceptor of the active site. The active-site Proton donor is aspartate 129.

Belongs to the HisA/HisF family.

The protein localises to the cytoplasm. The enzyme catalyses 1-(5-phospho-beta-D-ribosyl)-5-[(5-phospho-beta-D-ribosylamino)methylideneamino]imidazole-4-carboxamide = 5-[(5-phospho-1-deoxy-D-ribulos-1-ylimino)methylamino]-1-(5-phospho-beta-D-ribosyl)imidazole-4-carboxamide. Its pathway is amino-acid biosynthesis; L-histidine biosynthesis; L-histidine from 5-phospho-alpha-D-ribose 1-diphosphate: step 4/9. In Proteus mirabilis (strain HI4320), this protein is 1-(5-phosphoribosyl)-5-[(5-phosphoribosylamino)methylideneamino] imidazole-4-carboxamide isomerase.